A 397-amino-acid polypeptide reads, in one-letter code: MEDLFLKALPLLRELKKHGWQAYFVGGAVRDAQMNRDVGDIDIATDASPEEIEAIFPKTVDVGKEHGTIIVLFEGESYEVTTFRAELEYEDYRRPSGVQFIKSLKEDLKRRDLTINAMAMDEEGRLIDYFGGLRDIRERLIQTVGDPAERFHEDALRMLRALRFMSQLEFELSPNTKKAICENRPLLAHISTERKTVEFEKLLKGKAAGRALEAAAETGLYKELPGLDGKKERVLAARAFPFYQLQKSADIWAAFIHMISINPAEAHRFLKGWKLPGKVIRQALHTAERIDQKWDAVSMYEAGEETLLAASAIRSLRDKQAIDEEQLAEIRQSYQALPIKSLKDLAVSGSDLLNFRKKPAGKWVSDDLKRIERAVLNGELANQKKAIEEWLDSCSQI.

ATP is bound by residues glycine 27 and arginine 30. Glycine 27 and arginine 30 together coordinate CTP. Aspartate 40 and aspartate 42 together coordinate Mg(2+). 5 residues coordinate ATP: arginine 111, aspartate 154, arginine 157, arginine 160, and arginine 163. Positions 111, 154, 157, 160, and 163 each coordinate CTP.

It belongs to the tRNA nucleotidyltransferase/poly(A) polymerase family. Bacterial CCA-adding enzyme type 3 subfamily. In terms of assembly, homodimer. Mg(2+) serves as cofactor.

The enzyme catalyses a tRNA precursor + 2 CTP + ATP = a tRNA with a 3' CCA end + 3 diphosphate. It catalyses the reaction a tRNA with a 3' CCA end + 2 CTP + ATP = a tRNA with a 3' CCACCA end + 3 diphosphate. In terms of biological role, catalyzes the addition and repair of the essential 3'-terminal CCA sequence in tRNAs without using a nucleic acid template. Adds these three nucleotides in the order of C, C, and A to the tRNA nucleotide-73, using CTP and ATP as substrates and producing inorganic pyrophosphate. tRNA 3'-terminal CCA addition is required both for tRNA processing and repair. Also involved in tRNA surveillance by mediating tandem CCA addition to generate a CCACCA at the 3' terminus of unstable tRNAs. While stable tRNAs receive only 3'-terminal CCA, unstable tRNAs are marked with CCACCA and rapidly degraded. The protein is CCA-adding enzyme of Bacillus licheniformis (strain ATCC 14580 / DSM 13 / JCM 2505 / CCUG 7422 / NBRC 12200 / NCIMB 9375 / NCTC 10341 / NRRL NRS-1264 / Gibson 46).